A 269-amino-acid chain; its full sequence is 4-hydroxy-tetrahydrodipicolinate reductase (269 aa).

Residue 11-16 (GPIGRM) coordinates NAD(+). Lys-39 provides a ligand contact to NADP(+). NAD(+) contacts are provided by residues 101–103 (GTT) and 125–128 (ASNF). His-158 functions as the Proton donor/acceptor in the catalytic mechanism. His-159 contributes to the (S)-2,3,4,5-tetrahydrodipicolinate binding site. Lys-162 acts as the Proton donor in catalysis. Position 168–169 (168–169 (GT)) interacts with (S)-2,3,4,5-tetrahydrodipicolinate.

The protein belongs to the DapB family. Homotetramer.

It localises to the cytoplasm. It catalyses the reaction (S)-2,3,4,5-tetrahydrodipicolinate + NAD(+) + H2O = (2S,4S)-4-hydroxy-2,3,4,5-tetrahydrodipicolinate + NADH + H(+). The enzyme catalyses (S)-2,3,4,5-tetrahydrodipicolinate + NADP(+) + H2O = (2S,4S)-4-hydroxy-2,3,4,5-tetrahydrodipicolinate + NADPH + H(+). It participates in amino-acid biosynthesis; L-lysine biosynthesis via DAP pathway; (S)-tetrahydrodipicolinate from L-aspartate: step 4/4. In terms of biological role, catalyzes the conversion of 4-hydroxy-tetrahydrodipicolinate (HTPA) to tetrahydrodipicolinate. The polypeptide is 4-hydroxy-tetrahydrodipicolinate reductase (Buchnera aphidicola subsp. Acyrthosiphon pisum (strain 5A)).